A 292-amino-acid polypeptide reads, in one-letter code: 33 kDa chaperonin (292 aa).

Disulfide bonds link cysteine 230-cysteine 232 and cysteine 263-cysteine 266.

Belongs to the HSP33 family. In terms of processing, under oxidizing conditions two disulfide bonds are formed involving the reactive cysteines. Under reducing conditions zinc is bound to the reactive cysteines and the protein is inactive.

It localises to the cytoplasm. Redox regulated molecular chaperone. Protects both thermally unfolding and oxidatively damaged proteins from irreversible aggregation. Plays an important role in the bacterial defense system toward oxidative stress. The sequence is that of 33 kDa chaperonin from Salmonella typhimurium (strain LT2 / SGSC1412 / ATCC 700720).